The chain runs to 635 residues: BTB/POZ domain-containing protein SETH6 (635 aa).

In terms of domain architecture, BTB spans 39-104; sequence SDLTIEVGSA…CYGVGVQYNS (66 aa). An NPH3 domain is found at 206–494; sequence DWWGRSLPIL…VQVLFYEQTR (289 aa). Tyr-435 carries the post-translational modification Phosphotyrosine. The disordered stretch occupies residues 604-635; it reads QSVASSGKKHTEEKTNSERRFMFQKRRCHSVS. Basic and acidic residues predominate over residues 612–624; that stretch reads KHTEEKTNSERRF. Over residues 625 to 635 the composition is skewed to basic residues; that stretch reads MFQKRRCHSVS.

This sequence belongs to the NPH3 family.

The protein operates within protein modification; protein ubiquitination. Its function is as follows. May act as a substrate-specific adapter of an E3 ubiquitin-protein ligase complex (CUL3-RBX1-BTB) which mediates the ubiquitination and subsequent proteasomal degradation of target proteins. The protein is BTB/POZ domain-containing protein SETH6 (SETH6) of Arabidopsis thaliana (Mouse-ear cress).